The sequence spans 232 residues: Enolase-phosphatase E1 (232 aa).

This sequence belongs to the HAD-like hydrolase superfamily. MasA/MtnC family. In terms of assembly, monomer. Mg(2+) serves as cofactor.

It catalyses the reaction 5-methylsulfanyl-2,3-dioxopentyl phosphate + H2O = 1,2-dihydroxy-5-(methylsulfanyl)pent-1-en-3-one + phosphate. It participates in amino-acid biosynthesis; L-methionine biosynthesis via salvage pathway; L-methionine from S-methyl-5-thio-alpha-D-ribose 1-phosphate: step 3/6. The protein operates within amino-acid biosynthesis; L-methionine biosynthesis via salvage pathway; L-methionine from S-methyl-5-thio-alpha-D-ribose 1-phosphate: step 4/6. Functionally, bifunctional enzyme that catalyzes the enolization of 2,3-diketo-5-methylthiopentyl-1-phosphate (DK-MTP-1-P) into the intermediate 2-hydroxy-3-keto-5-methylthiopentenyl-1-phosphate (HK-MTPenyl-1-P), which is then dephosphorylated to form the acireductone 1,2-dihydroxy-3-keto-5-methylthiopentene (DHK-MTPene). The sequence is that of Enolase-phosphatase E1 from Xylella fastidiosa (strain Temecula1 / ATCC 700964).